A 305-amino-acid polypeptide reads, in one-letter code: Putative glutamine amidotransferase MTH_191 (305 aa).

C2 is a catalytic residue. Residues 2–305 (CGIAGVVYKD…SPGEVRVYEI (304 aa)) form the Glutamine amidotransferase type-2 domain.

The protein is Putative glutamine amidotransferase MTH_191 of Methanothermobacter thermautotrophicus (strain ATCC 29096 / DSM 1053 / JCM 10044 / NBRC 100330 / Delta H) (Methanobacterium thermoautotrophicum).